Consider the following 251-residue polypeptide: Ubiquinone/menaquinone biosynthesis C-methyltransferase UbiE (251 aa).

S-adenosyl-L-methionine contacts are provided by residues threonine 74, aspartate 95, 123-124 (NA), and serine 140.

Belongs to the class I-like SAM-binding methyltransferase superfamily. MenG/UbiE family.

It carries out the reaction a 2-demethylmenaquinol + S-adenosyl-L-methionine = a menaquinol + S-adenosyl-L-homocysteine + H(+). The enzyme catalyses a 2-methoxy-6-(all-trans-polyprenyl)benzene-1,4-diol + S-adenosyl-L-methionine = a 5-methoxy-2-methyl-3-(all-trans-polyprenyl)benzene-1,4-diol + S-adenosyl-L-homocysteine + H(+). Its pathway is quinol/quinone metabolism; menaquinone biosynthesis; menaquinol from 1,4-dihydroxy-2-naphthoate: step 2/2. It functions in the pathway cofactor biosynthesis; ubiquinone biosynthesis. Functionally, methyltransferase required for the conversion of demethylmenaquinol (DMKH2) to menaquinol (MKH2) and the conversion of 2-polyprenyl-6-methoxy-1,4-benzoquinol (DDMQH2) to 2-polyprenyl-3-methyl-6-methoxy-1,4-benzoquinol (DMQH2). In Photorhabdus laumondii subsp. laumondii (strain DSM 15139 / CIP 105565 / TT01) (Photorhabdus luminescens subsp. laumondii), this protein is Ubiquinone/menaquinone biosynthesis C-methyltransferase UbiE.